We begin with the raw amino-acid sequence, 405 residues long: MIHQPPAGTRDLLPLEVTQKGWINDRLQSVFQRWGYQRIVTSTIEWLDTLTAGGAIDPSTVIQLHGDSQGLSGLRPELTASIARSAVTRMSGESYPQRLCYRANVFRRPSAGYHGRQVEFYQAGVELLFSGGLLADAEILLLLADCFDSLAVPNWQIILGEAGLTRSLLSPFPAPLREQVKRCLALLDYVSLENLPYPNETLRQQARQLFHLRGNPEDVLAQVALLAQEESAQKAVNNLKSLVELLNADRSGPFPLILDLSLIQTFDYYTGIVFKAVSDHQQNLSILGQGGRYDQLLGVFHPQGQSAPGIGFSLNIEELHESLLSGQTLPTQAAPLDWLLIPLGNNAQIATFSKARSLRNGDPNLRVAIDLGGRSEAQIRTYARDRMIKNLAWVQEDGSVSEESL.

Belongs to the class-II aminoacyl-tRNA synthetase family. HisZ subfamily. As to quaternary structure, heteromultimer composed of HisG and HisZ subunits.

Its subcellular location is the cytoplasm. Its pathway is amino-acid biosynthesis; L-histidine biosynthesis; L-histidine from 5-phospho-alpha-D-ribose 1-diphosphate: step 1/9. Its function is as follows. Required for the first step of histidine biosynthesis. May allow the feedback regulation of ATP phosphoribosyltransferase activity by histidine. This is ATP phosphoribosyltransferase regulatory subunit from Microcystis aeruginosa (strain NIES-843 / IAM M-2473).